Here is a 1232-residue protein sequence, read N- to C-terminus: MVHPVQVGKRTRMSFSRLKEVGQMPNLIEVQLDSYDWFLKEGLQEVFDDINPIQDYTGNLNLEFVGYKLDLDSIKYSVEECKERDSTYAAPLKVKVRLLNKETGEIKEQEVFMGDFPLMTEQGTFIINGAERVIVSQLVRSPGVYYDMTVDKTGSKLFSATVIPNRGAWLEYETDSNNIIYVRIDKTRKLPITILARALGYGTDAEIIEFFGEDERLKATIEKDNTKTREEALLEIYKRLRPGEPPTVDSAESLIESLFFDAKRYDLSRVGRYKFNKKLAIHLRITNQIADQDIVNPQTGEILVQKGEKIDKDKAIEIQNCGINEVYIKIDDKSFKVIGNHFVDIHSLVPFDISDLNIKEYVFYPVLKEILDNYADEESIKEEIRKNIYRLIPKHIIREDIYATINYELGLSYDIGYKDDIDHLGNRRLRSVGELLQNQFRIGLSRMERVVKERMTIQDQEVITPQALINIRPVAASIKEFFGSSQLSQFMDQTNPLSELTHKRRLSALGPGGLSRERAGFEVRDVHHSHYGRMCPIETPEGPNIGLINSLATFAKVNEYGFIETPYRRIDPKNKRATNDIVYMTADEEDLYVIARSDEPIDENGYFIDDKVTVRAKEEVLVVPVSEVEYMDISPRQLVSVATAMIPFLENDDASRALMGSNMQRQAVPLLKPQAPIVGTGIEYKAATDSGVLPKAKNAGTVVYVSADEIRVRRDSDGGIDKYKLLKFKRSNQGTCINQRPIVSKGEVVAKETLLADGPSTDLGEIALGKNILMGFITWEGYNYEDAMLISEQLVKEDVFTSIHIEEYEAEARDTKLGPEEITRDIPNVGEEALKDIDERGIIRIGAEVRSGDILVGKVTPKGETELTAEERLLRAIFGEKAREVRDTSLRVPHGEAGIIVDVKIFTRENGDELPPGVNKLVRCYIAQKRKISVGDKMAGRHGNKGVISRVLPEEDMPFLPDGRPLQICLNPLGVPSRMNIGQVLEVHLGLAASKLGWHIATPVFDGAIESDIVDCLRKAGYSEDGKTVLYDGRTGEPFDNRVTVGYMYILKLAHLVDDKIHARSTGPYSLVTQQPLGGKAQFGGQRFGEMEVWALEAYGAAHTLQEILTVKSDDVVGRVKTYEAIVKGENIPEPGVPESFKVLIKELQALCLDVKVLNDDNQEIKLKESVDEDADELEVNIEGTENQPEEKEEKEKEDSDEYDDLREEDVEPDLEELSLDDLDLDDFGDEH.

The disordered stretch occupies residues 1170 to 1232 (SVDEDADELE…LDLDDFGDEH (63 aa)). Residues 1171 to 1180 (VDEDADELEV) show a composition bias toward acidic residues. The span at 1189–1198 (PEEKEEKEKE) shows a compositional bias: basic and acidic residues. Residues 1199 to 1232 (DSDEYDDLREEDVEPDLEELSLDDLDLDDFGDEH) are compositionally biased toward acidic residues.

Belongs to the RNA polymerase beta chain family. The RNAP catalytic core consists of 2 alpha, 1 beta, 1 beta' and 1 omega subunit. When a sigma factor is associated with the core the holoenzyme is formed, which can initiate transcription.

The catalysed reaction is RNA(n) + a ribonucleoside 5'-triphosphate = RNA(n+1) + diphosphate. Its function is as follows. DNA-dependent RNA polymerase catalyzes the transcription of DNA into RNA using the four ribonucleoside triphosphates as substrates. This Clostridium botulinum (strain Kyoto / Type A2) protein is DNA-directed RNA polymerase subunit beta.